We begin with the raw amino-acid sequence, 188 residues long: Adenine phosphoribosyltransferase (188 aa).

This sequence belongs to the purine/pyrimidine phosphoribosyltransferase family. In terms of assembly, homodimer.

Its subcellular location is the cytoplasm. It catalyses the reaction AMP + diphosphate = 5-phospho-alpha-D-ribose 1-diphosphate + adenine. The protein operates within purine metabolism; AMP biosynthesis via salvage pathway; AMP from adenine: step 1/1. Functionally, catalyzes a salvage reaction resulting in the formation of AMP, that is energically less costly than de novo synthesis. This chain is Adenine phosphoribosyltransferase, found in Burkholderia orbicola (strain MC0-3).